The sequence spans 363 residues: Aspartate carbamoyltransferase, chloroplastic (363 aa).

A disordered region spans residues 1–21 (MAAARATLPLPRVPAPSPRPQ). The transit peptide at 1 to 36 (MAAARATLPLPRVPAPSPRPQLRPFPSLPARRGAVA) directs the protein to the chloroplast. Positions 11–21 (PRVPAPSPRPQ) are enriched in pro residues. The carbamoyl phosphate site is built by Arg-109 and Thr-110. The UMP site is built by Arg-109 and Thr-110. Lys-139 provides a ligand contact to L-aspartate. Positions 160, 188, and 191 each coordinate carbamoyl phosphate. Arg-160 and His-188 together coordinate UMP. UMP contacts are provided by Arg-221 and Arg-283. Residues Arg-221 and Arg-283 each coordinate L-aspartate. Positions 323 and 324 each coordinate carbamoyl phosphate.

The protein belongs to the aspartate/ornithine carbamoyltransferase superfamily. ATCase family. Homotrimer.

The protein resides in the plastid. Its subcellular location is the chloroplast. The enzyme catalyses carbamoyl phosphate + L-aspartate = N-carbamoyl-L-aspartate + phosphate + H(+). It functions in the pathway pyrimidine metabolism; UMP biosynthesis via de novo pathway; (S)-dihydroorotate from bicarbonate: step 2/3. Feedback inhibited by UMP. Catalyzes the condensation of carbamoyl phosphate and aspartate to form carbamoyl aspartate and inorganic phosphate, the committed step in the de novo pyrimidine nucleotide biosynthesis pathway. In Oryza sativa subsp. japonica (Rice), this protein is Aspartate carbamoyltransferase, chloroplastic (PYRB).